Here is a 77-residue protein sequence, read N- to C-terminus: MSDIEQRVKNVVVEQLGVDEAEVTNAASFVDDLGADSLDTVELVMALEEEFGTEIPDEEAEKITTVQLAIDYVKSHQ.

A Carrier domain is found at 2 to 77 (SDIEQRVKNV…LAIDYVKSHQ (76 aa)). Position 37 is an O-(pantetheine 4'-phosphoryl)serine (S37).

It belongs to the acyl carrier protein (ACP) family. In terms of processing, 4'-phosphopantetheine is transferred from CoA to a specific serine of apo-ACP by AcpS. This modification is essential for activity because fatty acids are bound in thioester linkage to the sulfhydryl of the prosthetic group.

It is found in the cytoplasm. Its pathway is lipid metabolism; fatty acid biosynthesis. Functionally, carrier of the growing fatty acid chain in fatty acid biosynthesis. The protein is Acyl carrier protein of Leucothrix mucor.